The primary structure comprises 46 residues: U2-plectoxin-Pt1a (46 aa).

Contains 4 disulfide bonds. As to expression, expressed by the venom gland.

The protein localises to the secreted. Potent toxin that may paralyze and/or kill insect pests such as H.virescens (lepidoptera), S.exigua (beet armyworm) and M.sexta (tobacco hornworm). In Plectreurys tristis (Spider), this protein is U2-plectoxin-Pt1a.